A 482-amino-acid polypeptide reads, in one-letter code: 7-deoxyloganetic acid glucosyltransferase (482 aa).

The active-site Proton acceptor is His-22. His-22 is a binding site for an anthocyanidin. Asp-127 functions as the Charge relay in the catalytic mechanism. Thr-149, Ala-362, Gln-364, His-379, Trp-382, Asn-383, Ser-384, and Glu-387 together coordinate UDP-alpha-D-glucose. Residue Ala-402 coordinates an anthocyanidin. Asp-403 and Gln-404 together coordinate UDP-alpha-D-glucose.

Belongs to the UDP-glycosyltransferase family. As to expression, expressed in leaves, roots and stems. Lower levels of expression in flowers. Preferentially expressed in internal phloem parenchyma cells.

The catalysed reaction is 7-deoxyloganetate + UDP-alpha-D-glucose = 7-deoxyloganate + UDP + H(+). Its function is as follows. Iridoid glucosyltransferase acting exclusively on 7-deoxyloganetic acid. No activity with 7-deoxyloganetin. Catalyzes the fourth to last step in secologanin biosynthesis. This is 7-deoxyloganetic acid glucosyltransferase (UGT709C2) from Catharanthus roseus (Madagascar periwinkle).